We begin with the raw amino-acid sequence, 299 residues long: Sulfate adenylyltransferase subunit 2 (299 aa).

A disordered region spans residues Glu276–Phe299.

It belongs to the PAPS reductase family. CysD subfamily. In terms of assembly, heterodimer composed of CysD, the smaller subunit, and CysN.

The catalysed reaction is sulfate + ATP + H(+) = adenosine 5'-phosphosulfate + diphosphate. The protein operates within sulfur metabolism; hydrogen sulfide biosynthesis; sulfite from sulfate: step 1/3. With CysN forms the ATP sulfurylase (ATPS) that catalyzes the adenylation of sulfate producing adenosine 5'-phosphosulfate (APS) and diphosphate, the first enzymatic step in sulfur assimilation pathway. APS synthesis involves the formation of a high-energy phosphoric-sulfuric acid anhydride bond driven by GTP hydrolysis by CysN coupled to ATP hydrolysis by CysD. The chain is Sulfate adenylyltransferase subunit 2 from Pseudoalteromonas translucida (strain TAC 125).